The following is a 160-amino-acid chain: 17.9 kDa class II heat shock protein (160 aa).

One can recognise a sHSP domain in the interval 44–160 (DARAMAATPA…KPKTIQVQVA (117 aa)).

Belongs to the small heat shock protein (HSP20) family.

The protein resides in the cytoplasm. In Helianthus annuus (Common sunflower), this protein is 17.9 kDa class II heat shock protein (HSP17.9).